The sequence spans 84 residues: Large ribosomal subunit protein bL27 (84 aa).

The disordered stretch occupies residues 1 to 21 (MAHKKGGGSTKNGRDSNPQYL).

It belongs to the bacterial ribosomal protein bL27 family.

The protein is Large ribosomal subunit protein bL27 of Chloroherpeton thalassium (strain ATCC 35110 / GB-78).